The primary structure comprises 2561 residues: Plipastatin synthase subunit A (2561 aa).

The interval 1-1038 (MSEHTYSLTH…ATVIREGTDS (1038 aa)) is domain 1 (glutamate-activating). The condensation 1 stretch occupies residues 2-300 (SEHTYSLTHA…SSLPIRITVD (299 aa)). The segment at 485–888 (TYAELDMYAS…SIEGVREAAV (404 aa)) is adenylation 1. Residues 961–1036 (APRNVTEMKL…GLATVIREGT (76 aa)) form the Carrier 1 domain. Residue Ser-996 is modified to O-(pantetheine 4'-phosphoryl)serine. The condensation 2 stretch occupies residues 1048-1338 (KQETYPVSSA…NTLALRTRPE (291 aa)). The domain 2 (D-ornithine-activating) stretch occupies residues 1048–2554 (KQETYPVSSA…ELTLSALSSI (1507 aa)). The segment at 1525–1932 (SYRLLNERAN…QTGLVREAAV (408 aa)) is adenylation 2. Residues 2007-2081 (APVNDLQKTM…ELCGHITPLA (75 aa)) form the Carrier 2 domain. Ser-2042 bears the O-(pantetheine 4'-phosphoryl)serine mark. Residues 2089 to 2554 (AEGEAELTPI…ELTLSALSSI (466 aa)) form an epimerization region.

Belongs to the ATP-dependent AMP-binding enzyme family. It depends on pantetheine 4'-phosphate as a cofactor.

Functionally, this protein is a multifunctional enzyme, able to activate and polymerize the amino acids Glu and Orn as part of the biosynthesis of the lipopeptide antibiotic lipastatin. The Orn residue is further epimerized to the D-isomer form. The activation sites for these amino acids consist of individual domains. This Bacillus subtilis (strain 168) protein is Plipastatin synthase subunit A (ppsA).